We begin with the raw amino-acid sequence, 395 residues long: Phosphoglycerate kinase (395 aa).

Substrate contacts are provided by residues 20–22 (DLN), Arg35, 58–61 (HFGR), Arg117, and Arg150. Residues Lys200, Glu322, and 352-355 (GGDT) contribute to the ATP site.

The protein belongs to the phosphoglycerate kinase family. In terms of assembly, monomer.

Its subcellular location is the cytoplasm. The catalysed reaction is (2R)-3-phosphoglycerate + ATP = (2R)-3-phospho-glyceroyl phosphate + ADP. Its pathway is carbohydrate degradation; glycolysis; pyruvate from D-glyceraldehyde 3-phosphate: step 2/5. This chain is Phosphoglycerate kinase, found in Brucella suis biovar 1 (strain 1330).